The primary structure comprises 276 residues: Small ribosomal subunit protein uS2 (276 aa).

At S2 the chain carries N-acetylserine.

Belongs to the universal ribosomal protein uS2 family. Component of the small ribosomal subunit. Mature ribosomes consist of a small (40S) and a large (60S) subunit. The 40S subunit contains about 33 different proteins and 1 molecule of RNA (18S). The 60S subunit contains about 49 different proteins and 3 molecules of RNA (28S, 5.8S and 5S). Interacts with rps-21.

It localises to the cytoplasm. Functionally, required for the assembly and/or stability of the 40S ribosomal subunit. Required for the processing of the 20S rRNA-precursor to mature 18S rRNA in a late step of the maturation of 40S ribosomal subunits. Involved in cold-warm shock-induced translocation of the RNA exosome components from the nucleolus to nucleoplasm. This chain is Small ribosomal subunit protein uS2, found in Caenorhabditis elegans.